We begin with the raw amino-acid sequence, 412 residues long: Argininosuccinate synthase (412 aa).

ATP-binding positions include 11 to 19 and Ala-37; that span reads AYSGGLDTS. L-citrulline is bound by residues Tyr-88 and Ser-93. Residue 116–124 coordinates ATP; sequence SHGATGKGN. L-aspartate-binding residues include Thr-120, Asn-124, and Asp-125. Asn-124 serves as a coordination point for L-citrulline. 5 residues coordinate L-citrulline: Arg-128, Ser-181, Ser-190, Glu-271, and Tyr-283.

The protein belongs to the argininosuccinate synthase family. As to quaternary structure, homotetramer.

The protein localises to the cytoplasm. It localises to the cytosol. The enzyme catalyses L-citrulline + L-aspartate + ATP = 2-(N(omega)-L-arginino)succinate + AMP + diphosphate + H(+). It participates in amino-acid biosynthesis; L-arginine biosynthesis; L-arginine from L-ornithine and carbamoyl phosphate: step 2/3. Its pathway is nitrogen metabolism; urea cycle; (N(omega)-L-arginino)succinate from L-aspartate and L-citrulline: step 1/1. One of the enzymes of the urea cycle, the metabolic pathway transforming neurotoxic amonia produced by protein catabolism into inocuous urea in the liver of ureotelic animals. Catalyzes the formation of arginosuccinate from aspartate, citrulline and ATP and together with ASL it is responsible for the biosynthesis of arginine in most body tissues. The protein is Argininosuccinate synthase of Xenopus tropicalis (Western clawed frog).